A 764-amino-acid polypeptide reads, in one-letter code: 5-methyltetrahydropteroyltriglutamate--homocysteine methyltransferase (764 aa).

Residues 16–19 (RELK) and K121 contribute to the 5-methyltetrahydropteroyltri-L-glutamate site. Residues 440 to 442 (IGS) and E493 each bind L-homocysteine. Residues 440 to 442 (IGS) and E493 each bind L-methionine. Residues 524 to 525 (RC) and W570 contribute to the 5-methyltetrahydropteroyltri-L-glutamate site. D608 contacts L-homocysteine. D608 contacts L-methionine. Residue E614 participates in 5-methyltetrahydropteroyltri-L-glutamate binding. The Zn(2+) site is built by H650, C652, and E674. The Proton donor role is filled by H703. Zn(2+) is bound at residue C735.

It belongs to the vitamin-B12 independent methionine synthase family. Zn(2+) is required as a cofactor.

The enzyme catalyses 5-methyltetrahydropteroyltri-L-glutamate + L-homocysteine = tetrahydropteroyltri-L-glutamate + L-methionine. Its pathway is amino-acid biosynthesis; L-methionine biosynthesis via de novo pathway; L-methionine from L-homocysteine (MetE route): step 1/1. Its function is as follows. Catalyzes the transfer of a methyl group from 5-methyltetrahydrofolate to homocysteine resulting in methionine formation. The polypeptide is 5-methyltetrahydropteroyltriglutamate--homocysteine methyltransferase (Burkholderia cenocepacia (strain ATCC BAA-245 / DSM 16553 / LMG 16656 / NCTC 13227 / J2315 / CF5610) (Burkholderia cepacia (strain J2315))).